We begin with the raw amino-acid sequence, 96 residues long: Small ribosomal subunit protein bS6 (96 aa).

This sequence belongs to the bacterial ribosomal protein bS6 family.

In terms of biological role, binds together with bS18 to 16S ribosomal RNA. The sequence is that of Small ribosomal subunit protein bS6 from Carboxydothermus hydrogenoformans (strain ATCC BAA-161 / DSM 6008 / Z-2901).